The sequence spans 401 residues: Chorismate synthase (401 aa).

NADP(+) is bound by residues Arg40 and Arg46. Residues 135–137, 256–257, Gly300, 315–319, and Arg341 each bind FMN; these read RAS, QA, and KPIST.

This sequence belongs to the chorismate synthase family. In terms of assembly, homotetramer. FMNH2 is required as a cofactor.

The catalysed reaction is 5-O-(1-carboxyvinyl)-3-phosphoshikimate = chorismate + phosphate. The protein operates within metabolic intermediate biosynthesis; chorismate biosynthesis; chorismate from D-erythrose 4-phosphate and phosphoenolpyruvate: step 7/7. Functionally, catalyzes the anti-1,4-elimination of the C-3 phosphate and the C-6 proR hydrogen from 5-enolpyruvylshikimate-3-phosphate (EPSP) to yield chorismate, which is the branch point compound that serves as the starting substrate for the three terminal pathways of aromatic amino acid biosynthesis. This reaction introduces a second double bond into the aromatic ring system. In Mycobacterium bovis (strain BCG / Pasteur 1173P2), this protein is Chorismate synthase.